Consider the following 530-residue polypeptide: Probable NADH-specific resorcinol 4-hydroxylase (530 aa).

The catalysed reaction is resorcinol + NADH + O2 + H(+) = benzene-1,2,4-triol + NAD(+) + H2O. Functionally, single-component hydroxylase that is part of the gamma-resorcylate (GRA) degradation pathway. GRA is initially converted by GRA decarboxylase to resorcinol, which is hydroxylated by resorcinol 4-hydroxylase. This chain is Probable NADH-specific resorcinol 4-hydroxylase (tsdB), found in Rhodococcus jostii (strain RHA1).